The primary structure comprises 497 residues: Dihydrolipoyl dehydrogenase (497 aa).

Residues Glu60–Cys69, Lys78, Gly142, and Thr170–Ser172 each bind FAD. Cys69 and Cys74 are oxidised to a cystine. NAD(+) is bound by residues Gly207–Glu214, Glu230, Val264, and Gly302. Residues Asp343 and Met349–His352 contribute to the FAD site. Residue His475 is the Proton acceptor of the active site.

This sequence belongs to the class-I pyridine nucleotide-disulfide oxidoreductase family. In terms of assembly, homodimer. The cofactor is FAD.

It is found in the cytoplasm. It carries out the reaction N(6)-[(R)-dihydrolipoyl]-L-lysyl-[protein] + NAD(+) = N(6)-[(R)-lipoyl]-L-lysyl-[protein] + NADH + H(+). This Manduca sexta (Tobacco hawkmoth) protein is Dihydrolipoyl dehydrogenase.